Here is a 33-residue protein sequence, read N- to C-terminus: Photosystem II reaction center protein Psb30 (33 aa).

Residues 5–25 (IVFQLTSLVLILAAGPLVVVL) traverse the membrane as a helical segment.

The protein belongs to the Psb30/Ycf12 family. As to quaternary structure, PSII is composed of 1 copy each of membrane proteins PsbA, PsbB, PsbC, PsbD, PsbE, PsbF, PsbH, PsbI, PsbJ, PsbK, PsbL, PsbM, PsbT, PsbX, PsbY, PsbZ, Psb30/Ycf12, peripheral proteins of the oxygen-evolving complex and a large number of cofactors. It forms dimeric complexes.

Its subcellular location is the plastid. The protein resides in the chloroplast thylakoid membrane. In terms of biological role, a core subunit of photosystem II (PSII), probably helps stabilize the reaction center. In Tetradesmus obliquus (Green alga), this protein is Photosystem II reaction center protein Psb30.